The primary structure comprises 488 residues: UDP-glycosyltransferase 73B1 (488 aa).

UDP-alpha-D-glucose contacts are provided by residues Thr297, 356–358 (APQ), 373–381 (HCGWNSLLE), and 395–398 (GAEQ).

Belongs to the UDP-glycosyltransferase family.

Its function is as follows. Possesses low quercetin 3-O-glucosyltransferase and 7-O-glucosyltransferase activities in vitro. The polypeptide is UDP-glycosyltransferase 73B1 (UGT73B1) (Arabidopsis thaliana (Mouse-ear cress)).